The following is a 432-amino-acid chain: Adenylosuccinate synthetase (432 aa).

Residues 12 to 18 (GDEGKGK) and 40 to 42 (GHT) each bind GTP. Catalysis depends on D13, which acts as the Proton acceptor. Positions 13 and 40 each coordinate Mg(2+). IMP is bound by residues 13–16 (DEGK), 38–41 (NAGH), T130, R144, Q225, T240, and R304. H41 functions as the Proton donor in the catalytic mechanism. 300 to 306 (ATTGRPR) lines the substrate pocket. GTP is bound by residues R306, 332–334 (KLD), and 414–416 (SVG).

This sequence belongs to the adenylosuccinate synthetase family. As to quaternary structure, homodimer. Mg(2+) is required as a cofactor.

The protein localises to the cytoplasm. It catalyses the reaction IMP + L-aspartate + GTP = N(6)-(1,2-dicarboxyethyl)-AMP + GDP + phosphate + 2 H(+). Its pathway is purine metabolism; AMP biosynthesis via de novo pathway; AMP from IMP: step 1/2. Its function is as follows. Plays an important role in the de novo pathway of purine nucleotide biosynthesis. Catalyzes the first committed step in the biosynthesis of AMP from IMP. This Anaeromyxobacter dehalogenans (strain 2CP-1 / ATCC BAA-258) protein is Adenylosuccinate synthetase.